Here is a 242-residue protein sequence, read N- to C-terminus: Glutamine transport ATP-binding protein GlnQ (242 aa).

Residues 2–236 form the ABC transporter domain; it reads IYFHQVNKYY…PKEERAKVFL (235 aa). 34-41 contributes to the ATP binding site; it reads GPSGSGKS.

The protein belongs to the ABC transporter superfamily.

The protein resides in the cell membrane. Part of the binding-protein-dependent transport system for glutamine. Probably responsible for energy coupling to the transport system. This is Glutamine transport ATP-binding protein GlnQ (glnQ) from Geobacillus stearothermophilus (Bacillus stearothermophilus).